The primary structure comprises 214 residues: pH-sensitive calcium channel (214 aa).

Over 1 to 15 (MQATVHESKQSIMQR) the chain is Cytoplasmic. Residues 16 to 37 (ILTVFVFTLLIATVGLFIGQFV) traverse the membrane as a helical segment. Over 38–44 (PVALMLP) the chain is Extracellular. A helical transmembrane segment spans residues 45 to 59 (LSILEVAMIILAFWM). Over 60-66 (RRRKAVG) the chain is Cytoplasmic. A helical transmembrane segment spans residues 67–86 (YAFVYTFAFVSGITLFPIVS). Over 87–95 (HYASIAGAY) the chain is Extracellular. A helical transmembrane segment spans residues 96-117 (VVLEAFGSTFVIFAVLGTIGAK). Topologically, residues 118–122 (MKKDL) are cytoplasmic. A helical membrane pass occupies residues 123–146 (SFLWSFLLVAVLALAVVGIFNIFS). At 147 to 151 (PLNSA) the chain is on the extracellular side. The helical transmembrane segment at 152–175 (AMMAYSVIGTIVFSLYILYDLNQI) threads the bilayer. Topologically, residues 176–185 (KHRHITEDLI) are cytoplasmic. The helical transmembrane segment at 186–207 (PVMALSLYLDFINLFINLLRFF) threads the bilayer. Residues 208 to 214 (GILSSDD) are Extracellular-facing.

The protein belongs to the BI1 family. Monomer.

The protein resides in the cell membrane. The catalysed reaction is Ca(2+)(in) = Ca(2+)(out). With respect to regulation, the calcium-release activity is mediated by two factors: pH and transmembrane ion gradient. It was proposed, based on an MD simulation, that the conserved aspartyl dyad (Asp-171-Asp-195) regulates Ca(2+) binding, pH sensing, and the channel pore opening and closing, and that protonation of Asp-171 probably weakens its interaction with Arg-60, facilitating the opening of the channel. Another study using nanodiscs suggests that Asp-171 is not a pH sensor regulating the pore dynamics; instead, it is only involved in the gating of calcium ions. When crystallized in detergents at different pH conditions, the transition between open and closed conformations is regulated by pH. Ca(2+) binding is inhibited by Na(+), K(+), Li(+), Yb(3+) and Lu(3+), but not by Mg(2+) and Mn(2+). Its function is as follows. Calcium channel that probably plays a role in the regulation of calcium homeostasis. Uptakes calcium ions and mediates calcium flux in proteoliposomes in a pH-dependent manner. When expressed in E.coli in the presence of high extracellular calcium concentrations, shows calcium-leak activity, increasing intracellular calcium concentration. It can also mediate Ca(2+) flux from the endoplamic reticulum (ER) when expressed in permeabilized mammalian cells. Calcium transport activity is also detected in ER-like lipid vesicles. This chain is pH-sensitive calcium channel, found in Bacillus subtilis (strain 168).